Here is a 148-residue protein sequence, read N- to C-terminus: D-aminoacyl-tRNA deacylase (148 aa).

The short motif at 137 to 138 (GP) is the Gly-cisPro motif, important for rejection of L-amino acids element.

The protein belongs to the DTD family. As to quaternary structure, homodimer.

The protein resides in the cytoplasm. It carries out the reaction glycyl-tRNA(Ala) + H2O = tRNA(Ala) + glycine + H(+). The enzyme catalyses a D-aminoacyl-tRNA + H2O = a tRNA + a D-alpha-amino acid + H(+). Functionally, an aminoacyl-tRNA editing enzyme that deacylates mischarged D-aminoacyl-tRNAs. Also deacylates mischarged glycyl-tRNA(Ala), protecting cells against glycine mischarging by AlaRS. Acts via tRNA-based rather than protein-based catalysis; rejects L-amino acids rather than detecting D-amino acids in the active site. By recycling D-aminoacyl-tRNA to D-amino acids and free tRNA molecules, this enzyme counteracts the toxicity associated with the formation of D-aminoacyl-tRNA entities in vivo and helps enforce protein L-homochirality. This chain is D-aminoacyl-tRNA deacylase, found in Oenococcus oeni (strain ATCC BAA-331 / PSU-1).